Consider the following 1058-residue polypeptide: Carbamoyl phosphate synthase large chain (1058 aa).

Positions 1 to 401 are carboxyphosphate synthetic domain; that stretch reads MPKRKDIQKI…SLLKACRSLE (401 aa). The ATP site is built by arginine 129, arginine 169, glycine 175, glycine 176, arginine 208, isoleucine 210, glutamate 215, glycine 241, isoleucine 242, histidine 243, glutamine 284, and glutamate 298. Residues 133–327 enclose the ATP-grasp 1 domain; it reads KQLMQELDQP…IAKLAAKIAV (195 aa). Residues glutamine 284, glutamate 298, and asparagine 300 each contribute to the Mg(2+) site. Mn(2+) is bound by residues glutamine 284, glutamate 298, and asparagine 300. Residues 402–546 are oligomerization domain; that stretch reads IGVCHNEMTS…YSTYELENES (145 aa). The tract at residues 547 to 929 is carbamoyl phosphate synthetic domain; sequence VQSNKESILV…ALYKAFEANN (383 aa). The ATP-grasp 2 domain maps to 671–861; the sequence is EKALKELGIP…MAQIATKLIL (191 aa). 10 residues coordinate ATP: arginine 707, serine 746, isoleucine 748, glutamate 752, glycine 777, valine 778, histidine 779, serine 780, glutamine 820, and glutamate 832. The Mg(2+) site is built by glutamine 820, glutamate 832, and asparagine 834. Residues glutamine 820, glutamate 832, and asparagine 834 each coordinate Mn(2+). One can recognise an MGS-like domain in the interval 930–1058; the sequence is SHLSEFGQIV…ESRCFNIEAI (129 aa). An allosteric domain region spans residues 930–1058; it reads SHLSEFGQIV…ESRCFNIEAI (129 aa).

The protein belongs to the CarB family. In terms of assembly, composed of two chains; the small (or glutamine) chain promotes the hydrolysis of glutamine to ammonia, which is used by the large (or ammonia) chain to synthesize carbamoyl phosphate. Tetramer of heterodimers (alpha,beta)4. Mg(2+) serves as cofactor. Mn(2+) is required as a cofactor.

It carries out the reaction hydrogencarbonate + L-glutamine + 2 ATP + H2O = carbamoyl phosphate + L-glutamate + 2 ADP + phosphate + 2 H(+). The catalysed reaction is hydrogencarbonate + NH4(+) + 2 ATP = carbamoyl phosphate + 2 ADP + phosphate + 2 H(+). It functions in the pathway amino-acid biosynthesis; L-arginine biosynthesis; carbamoyl phosphate from bicarbonate: step 1/1. Its pathway is pyrimidine metabolism; UMP biosynthesis via de novo pathway; (S)-dihydroorotate from bicarbonate: step 1/3. Its function is as follows. Large subunit of the glutamine-dependent carbamoyl phosphate synthetase (CPSase). CPSase catalyzes the formation of carbamoyl phosphate from the ammonia moiety of glutamine, carbonate, and phosphate donated by ATP, constituting the first step of 2 biosynthetic pathways, one leading to arginine and/or urea and the other to pyrimidine nucleotides. The large subunit (synthetase) binds the substrates ammonia (free or transferred from glutamine from the small subunit), hydrogencarbonate and ATP and carries out an ATP-coupled ligase reaction, activating hydrogencarbonate by forming carboxy phosphate which reacts with ammonia to form carbamoyl phosphate. The protein is Carbamoyl phosphate synthase large chain of Streptococcus pyogenes serotype M1.